The following is a 457-amino-acid chain: Argininosuccinate lyase (457 aa).

The protein belongs to the lyase 1 family. Argininosuccinate lyase subfamily.

The protein resides in the cytoplasm. It catalyses the reaction 2-(N(omega)-L-arginino)succinate = fumarate + L-arginine. The protein operates within amino-acid biosynthesis; L-arginine biosynthesis; L-arginine from L-ornithine and carbamoyl phosphate: step 3/3. This chain is Argininosuccinate lyase, found in Yersinia pseudotuberculosis serotype O:1b (strain IP 31758).